Reading from the N-terminus, the 63-residue chain is Toxin Cn11 (63 aa).

Positions 2–63 constitute an LCN-type CS-alpha/beta domain; the sequence is RDGYPVDEKG…KVWTYETNTC (62 aa). Intrachain disulfides connect Cys-12/Cys-63, Cys-16/Cys-37, Cys-23/Cys-44, and Cys-27/Cys-46.

Belongs to the long (4 C-C) scorpion toxin superfamily. Sodium channel inhibitor family. In terms of tissue distribution, expressed by the venom gland.

Its subcellular location is the secreted. In terms of biological role, first blocker of sodium channels (Nav) found in scorpions. Is lethal to crustaceans (Cambarellus montezumae), less toxic to insects (crickets) and non-toxic to mammals (mice) at the doses assayed. The sequence is that of Toxin Cn11 from Centruroides noxius (Mexican scorpion).